The sequence spans 236 residues: Uridylate kinase (236 aa).

10-13 (KLSG) contributes to the ATP binding site. G52 is a binding site for UMP. ATP contacts are provided by G53 and R57. UMP contacts are provided by residues D72 and 133–140 (TGNPFFTT). ATP contacts are provided by T160, Y166, and D169.

Belongs to the UMP kinase family. As to quaternary structure, homohexamer.

It is found in the cytoplasm. The catalysed reaction is UMP + ATP = UDP + ADP. Its pathway is pyrimidine metabolism; CTP biosynthesis via de novo pathway; UDP from UMP (UMPK route): step 1/1. Its activity is regulated as follows. Inhibited by UTP. Its function is as follows. Catalyzes the reversible phosphorylation of UMP to UDP. In Cupriavidus necator (strain ATCC 17699 / DSM 428 / KCTC 22496 / NCIMB 10442 / H16 / Stanier 337) (Ralstonia eutropha), this protein is Uridylate kinase.